A 94-amino-acid polypeptide reads, in one-letter code: Protein S100-A1 (94 aa).

2 consecutive EF-hand domains span residues 13–48 (INVF…FLDV) and 50–85 (KDAD…LTVA). 7 residues coordinate Ca(2+): Lys28, Glu33, Asp63, Asn65, Asp67, Glu69, and Glu74. At Cys86 the chain carries S-nitrosocysteine.

Belongs to the S-100 family. As to quaternary structure, dimer of either two alpha chains, or two beta chains, or one alpha and one beta chain. Also forms heterodimers with S100P. Interacts with AGER. Interacts with CAPZA1. Interacts with FKBP4. Interacts with RYR1 and RYR2. Interacts with CACYBP in a calcium-dependent manner. Interacts with PPP5C (via TPR repeats); the interaction is calcium-dependent and modulates PPP5C activity. Interacts with ATP2A2 and PLN in a Ca(2+)-dependent manner. Interacts with mitochondrial F1-ATPase subunits ATP5F1A and ATP5F1B; these interactions increase F1-ATPase activity. Post-translationally, glutathionylated; glutathionylation increases affinity to calcium about 10-fold. Expressed in the cardiac and the skeletal muscles.

The protein localises to the cytoplasm. The protein resides in the sarcoplasmic reticulum. Its subcellular location is the mitochondrion. Functionally, small calcium binding protein that plays important roles in several biological processes such as Ca(2+) homeostasis, chondrocyte biology and cardiomyocyte regulation. In response to an increase in intracellular Ca(2+) levels, binds calcium which triggers conformational changes. These changes allow interactions with specific target proteins and modulate their activity. Regulates a network in cardiomyocytes controlling sarcoplasmic reticulum Ca(2+) cycling and mitochondrial function through interaction with the ryanodine receptors RYR1 and RYR2, sarcoplasmic reticulum Ca(2+)-ATPase/ATP2A2 and mitochondrial F1-ATPase. Facilitates diastolic Ca(2+) dissociation and myofilament mechanics in order to improve relaxation during diastole. This Mus musculus (Mouse) protein is Protein S100-A1 (S100a1).